Here is a 406-residue protein sequence, read N- to C-terminus: Tryptophan synthase beta chain (406 aa).

Lys-99 is subject to N6-(pyridoxal phosphate)lysine.

Belongs to the TrpB family. In terms of assembly, tetramer of two alpha and two beta chains. Requires pyridoxal 5'-phosphate as cofactor.

The enzyme catalyses (1S,2R)-1-C-(indol-3-yl)glycerol 3-phosphate + L-serine = D-glyceraldehyde 3-phosphate + L-tryptophan + H2O. It participates in amino-acid biosynthesis; L-tryptophan biosynthesis; L-tryptophan from chorismate: step 5/5. The beta subunit is responsible for the synthesis of L-tryptophan from indole and L-serine. The polypeptide is Tryptophan synthase beta chain (Phenylobacterium zucineum (strain HLK1)).